We begin with the raw amino-acid sequence, 134 residues long: Profilin-1 (134 aa).

The protein belongs to the profilin family. Occurs in many kinds of cells as a complex with monomeric actin in a 1:1 ratio.

The protein resides in the cytoplasm. It localises to the cytoskeleton. Binds to actin and affects the structure of the cytoskeleton. At high concentrations, profilin prevents the polymerization of actin, whereas it enhances it at low concentrations. By binding to PIP2, it inhibits the formation of IP3 and DG. The sequence is that of Profilin-1 (PRO1) from Nicotiana tabacum (Common tobacco).